The sequence spans 108 residues: UPF0060 membrane protein RHOS4_03690 (108 aa).

4 helical membrane-spanning segments follow: residues 5-25, 32-52, 62-82, and 86-106; these read LAAY…VWAW, ALWL…LALT, AVYG…VEGV, and RWDM…LWAP.

It belongs to the UPF0060 family.

It is found in the cell inner membrane. In Cereibacter sphaeroides (strain ATCC 17023 / DSM 158 / JCM 6121 / CCUG 31486 / LMG 2827 / NBRC 12203 / NCIMB 8253 / ATH 2.4.1.) (Rhodobacter sphaeroides), this protein is UPF0060 membrane protein RHOS4_03690.